A 461-amino-acid polypeptide reads, in one-letter code: Fumarate hydratase class II (461 aa).

Substrate contacts are provided by residues 97–99 (SGT), 127–130 (HPND), 137–139 (SSN), and threonine 185. The active-site Proton donor/acceptor is the histidine 186. Serine 316 is an active-site residue. Residues serine 317 and 322-324 (KVN) each bind substrate.

The protein belongs to the class-II fumarase/aspartase family. Fumarase subfamily. Homotetramer.

The protein localises to the cytoplasm. The enzyme catalyses (S)-malate = fumarate + H2O. It participates in carbohydrate metabolism; tricarboxylic acid cycle; (S)-malate from fumarate: step 1/1. Functionally, involved in the TCA cycle. Catalyzes the stereospecific interconversion of fumarate to L-malate. This Staphylococcus aureus (strain COL) protein is Fumarate hydratase class II.